Here is a 98-residue protein sequence, read N- to C-terminus: MALTKAEMSENLFEKLGISKRDAKDLVELFFEEVRRSLENGEQVKLSGFGNFDLRDKNQRPGRNPKTGEDIPITARRVVTFRPGQKLKSRVEKATPKE.

Residues 52–71 (FDLRDKNQRPGRNPKTGEDI) are disordered.

This sequence belongs to the bacterial histone-like protein family. In terms of assembly, heterodimer of an alpha and a beta chain.

Its function is as follows. This protein is one of the two subunits of integration host factor, a specific DNA-binding protein that functions in genetic recombination as well as in transcriptional and translational control. In Photorhabdus laumondii subsp. laumondii (strain DSM 15139 / CIP 105565 / TT01) (Photorhabdus luminescens subsp. laumondii), this protein is Integration host factor subunit alpha.